The following is a 344-amino-acid chain: MESFILLFTNDKLLIFNFIIILLFIKSLSYIIPLIIAIAYLTLIERKIIGSIQKRKGPNIVGIFGLLQPIADGLKLLLKETSLPNSANIFIFIIAPILTFFLALCAWAIMPFNEINFYSNLNIGILYLLAISSLGVYGIIISGWASNSKYAFLGGLRSAAQIISYEVSIGLIIINVLLCSGTLNLKEIVLAQQNIWYIFPLFPLFLMFFISSLAETNRSPFDLPEAEAELVAGYNVEYSAMGFALFFLGEYTNIILISAVSTILFLAGWLPPFDIFLFNWIPNSIWFGFKTIIILVLFIWVRAAFPRYRYDQLIQLGWKIFLPLSLAWLMLTSGILLSYDGFPN.

10 helical membrane-spanning segments follow: residues phenylalanine 18–isoleucine 38, proline 58–leucine 78, isoleucine 89–isoleucine 109, isoleucine 123–glycine 143, alanine 159–cysteine 179, isoleucine 195–glutamate 215, alanine 228–leucine 248, asparagine 253–phenylalanine 273, isoleucine 281–valine 301, and leucine 316–leucine 336.

Belongs to the complex I subunit 1 family.

It is found in the mitochondrion inner membrane. It catalyses the reaction a ubiquinone + NADH + 5 H(+)(in) = a ubiquinol + NAD(+) + 4 H(+)(out). Core subunit of the mitochondrial membrane respiratory chain NADH dehydrogenase (Complex I) that is believed to belong to the minimal assembly required for catalysis. Complex I functions in the transfer of electrons from NADH to the respiratory chain. The immediate electron acceptor for the enzyme is believed to be ubiquinone. The sequence is that of NADH-ubiquinone oxidoreductase chain 1 (ND1) from Cyanidium caldarium (Red alga).